The sequence spans 196 residues: Phosphoheptose isomerase (196 aa).

Residues 36–196 (MVACLMNEGK…AVDYMLLGGD (161 aa)) enclose the SIS domain. A substrate-binding site is contributed by 51-53 (NGG). Histidine 60 and glutamate 64 together coordinate Zn(2+). Residues glutamate 64, 93 to 94 (ND), 119 to 121 (STS), serine 124, and glutamine 174 contribute to the substrate site. 2 residues coordinate Zn(2+): glutamine 174 and histidine 182.

The protein belongs to the SIS family. GmhA subfamily. Homotetramer. Zn(2+) serves as cofactor.

The protein resides in the cytoplasm. It carries out the reaction 2 D-sedoheptulose 7-phosphate = D-glycero-alpha-D-manno-heptose 7-phosphate + D-glycero-beta-D-manno-heptose 7-phosphate. Its pathway is carbohydrate biosynthesis; D-glycero-D-manno-heptose 7-phosphate biosynthesis; D-glycero-alpha-D-manno-heptose 7-phosphate and D-glycero-beta-D-manno-heptose 7-phosphate from sedoheptulose 7-phosphate: step 1/1. In terms of biological role, catalyzes the isomerization of sedoheptulose 7-phosphate in D-glycero-D-manno-heptose 7-phosphate. The sequence is that of Phosphoheptose isomerase from Laribacter hongkongensis (strain HLHK9).